We begin with the raw amino-acid sequence, 106 residues long: UPF0145 protein VCM66_A0911 (106 aa).

The protein belongs to the UPF0145 family.

The chain is UPF0145 protein VCM66_A0911 from Vibrio cholerae serotype O1 (strain M66-2).